The sequence spans 394 residues: uncharacterized protein (394 aa).

A run of 11 helical transmembrane segments spans residues 10 to 30, 50 to 70, 79 to 99, 100 to 120, 138 to 158, 166 to 186, 218 to 238, 243 to 263, 291 to 311, 337 to 357, and 364 to 384; these read PALI…NYYA, FIVT…VPLG, IVSM…SQSL, AMMI…QILV, TIMS…GLLA, VFWV…RGLP, LLGC…AFLL, FNYS…GALG, WLAI…ILVL, LTAG…LISA, and GWAG…LVWW.

Belongs to the major facilitator superfamily.

It is found in the cell inner membrane. This is an uncharacterized protein from Escherichia coli O157:H7.